The chain runs to 247 residues: MLDATIDADVFRESVDAIAALVTECRLHATEQGLRTRTVDTANVAMISLELDKDVFESYQATSSEMGIDIVKIKNVLSMMGKGDPVHLALAEESRKLEVSFQSYQYSITLLDTNTIRKDPNAPTIELPGKVVISGAALSAAIKAASVVSDKIALGIDPEKGIFYMEAEGDTDHIRLELGDDKLISLVPVQARSLFSLDYLKDMGKTMSKAEKVEISLGIDHPVEFTFDIADGKGHVMYLLAPRIEAD.

The protein belongs to the PCNA family. In terms of assembly, homotrimer. The subunits circularize to form a toroid; DNA passes through its center. Replication factor C (RFC) is required to load the toroid on the DNA.

Functionally, sliding clamp subunit that acts as a moving platform for DNA processing. Responsible for tethering the catalytic subunit of DNA polymerase and other proteins to DNA during high-speed replication. In Methanosphaerula palustris (strain ATCC BAA-1556 / DSM 19958 / E1-9c), this protein is DNA polymerase sliding clamp.